The chain runs to 340 residues: DNA-directed RNA polymerase subunit alpha (340 aa).

The alpha N-terminal domain (alpha-NTD) stretch occupies residues 1-236; that stretch reads MLSLSKNWNT…EQLQLFISFE (236 aa). The tract at residues 251 to 340 is alpha C-terminal domain (alpha-CTD); the sequence is FSPYLLKRVD…LSKRYEDSYN (90 aa).

This sequence belongs to the RNA polymerase alpha chain family. In terms of assembly, homodimer. The RNAP catalytic core consists of 2 alpha, 1 beta, 1 beta' and 1 omega subunit. When a sigma factor is associated with the core the holoenzyme is formed, which can initiate transcription.

It carries out the reaction RNA(n) + a ribonucleoside 5'-triphosphate = RNA(n+1) + diphosphate. In terms of biological role, DNA-dependent RNA polymerase catalyzes the transcription of DNA into RNA using the four ribonucleoside triphosphates as substrates. This chain is DNA-directed RNA polymerase subunit alpha, found in Rickettsia akari (strain Hartford).